A 487-amino-acid chain; its full sequence is GDP-Man:Man(3)GlcNAc(2)-PP-Dol alpha-1,2-mannosyltransferase (487 aa).

At 1-16 (MAGILCLCGMMRLLTA) the chain is on the lumenal side. Residues 17-37 (LFIPVLIASIGLCLVLVLLFI) traverse the membrane as a helical segment. At 38-231 (CTRLWIQRKK…SNNPVLSRLK (194 aa)) the chain is on the cytoplasmic side. Positions 232–252 (LIYYYLFAVIYGWVGSCSDVI) form an intramembrane region, helical. The Cytoplasmic segment spans residues 253-394 (MVNSTWTFAH…IGLHTMWNEH (142 aa)). The helical intramembrane region spans 395 to 415 (FGIGIVECMAAGTIILAHNSG). At 416–487 (GPKLDIVVPY…FLASSEPLFM (72 aa)) the chain is on the cytoplasmic side.

Belongs to the glycosyltransferase group 1 family. Glycosyltransferase 4 subfamily.

The protein localises to the endoplasmic reticulum membrane. The catalysed reaction is an alpha-D-Man-(1-&gt;3)-[alpha-D-Man-(1-&gt;6)]-beta-D-Man-(1-&gt;4)-beta-D-GlcNAc-(1-&gt;4)-alpha-D-GlcNAc-diphospho-di-trans,poly-cis-dolichol + 2 GDP-alpha-D-mannose = an alpha-D-Man-(1-&gt;2)-alpha-D-Man-(1-&gt;2)-alpha-D-Man-(1-&gt;3)-[alpha-D-Man-(1-&gt;6)]-beta-D-Man-(1-&gt;4)-beta-D-GlcNAc-(1-&gt;4)-alpha-D-GlcNAc-diphospho-di-trans,poly-cis-dolichol + 2 GDP + 2 H(+). The protein operates within protein modification; protein glycosylation. In terms of biological role, GDP-Man:Man(3)GlcNAc(2)-PP-Dol alpha-1,2-mannosyltransferase that operates in the biosynthetic pathway of dolichol-linked oligosaccharides, the glycan precursors employed in protein asparagine (N)-glycosylation. The assembly of dolichol-linked oligosaccharides begins on the cytosolic side of the endoplasmic reticulum membrane and finishes in its lumen. The sequential addition of sugars to dolichol pyrophosphate produces dolichol-linked oligosaccharides containing fourteen sugars, including two GlcNAcs, nine mannoses and three glucoses. Once assembled, the oligosaccharide is transferred from the lipid to nascent proteins by oligosaccharyltransferases. Catalyzes, on the cytoplasmic face of the endoplasmic reticulum, the addition of the fourth and fifth mannose residues to the dolichol-linked oligosaccharide chain, to produce Man(5)GlcNAc(2)-PP-dolichol core oligosaccharide. Man(5)GlcNAc(2)-PP-dolichol is a substrate for ALG3, the following enzyme in the biosynthetic pathway. In Xenopus tropicalis (Western clawed frog), this protein is GDP-Man:Man(3)GlcNAc(2)-PP-Dol alpha-1,2-mannosyltransferase (alg11).